Reading from the N-terminus, the 915-residue chain is MNRFKVSKFRHTEARQPRREAWIGDIRAGTAPSCGNHIKASCSLIAFNSDHPGVLGIVPLESQGEDKRQVTHLGCHSDLVTDLDFSPFDDFLLATASADRTVKLWRLPLSGQALPSGPGLLLGPEDAQVEVLQFHPTADGVLLSAAGRAVKVWDATKQQPLTELATHGDLVQGAAWSRDGALLGTTCKDKQLRIFDPRAKPEAAQSTPAHENSRDGRLVWTGTQEYLVSTGFNQMREREVKLWDTRLFSAALTSLTLDTSPRSLVPLLDPDSGLLVLAGKGENQLYCYEAAPQQPALSPVTQCLLESVLRGAALVPRRALAVMGCEVLRVLQLSDTAIVPISYHVPRKTVEFHEDLFPDTAGCVPASDPHAWWAGSDQQVQRVSLHPARRAHPSFTSCLAPPAELTPATAQPAGTPEGFSSTPSSLTSPSTPSSLGPSLTSTSGIGTSPSQRSLQSLLGPSSKFRHAQGSVLHRDSHITNLKGLNLTTPGESDGFCANQLRVAVPLLSSGGQVAVLELRKPGRLPDTALPTLQNGVAVTDLAWDPFDPHRLAVAGEDARIRLWRVPPDGLQEVLTMPEAVLTGHTEKIYSLRFHPLAADVLASSSYDLTVRIWDLKVGAEQLRLQGHRDQIFGLAWSPDGQQLATVCKDGRLRIYEPRGSPEPLQEGPGPEGARGARVVWVCDGHYLLVSGFDSRSERQLLLYSAKALAGGPSAVLGLDVAPSTLLPSYDPDTGLVLLTGKGDTRVFLYELLPGAPFFLECNSFTSPDPHKGFILLPKTECDVREVEFARCLRLRQTSLEPVAFRLPRVRKEFFQDDVFPDTTVSWEPALSAEAWLGGANGTPRLLSLQPPGMTPVSQAPREAPARRAPSSVYLEEKSDQQKKEELLSAMVAKLGNREDPLPQDSFEGVDEDEWD.

WD repeat units follow at residues 75–115, 124–163, 166–205, and 209–253; these read CHSD…QALP, PEDA…PLTE, THGD…EAAQ, and AHEN…AALT. The interval 396-456 is disordered; it reads TSCLAPPAEL…TSPSQRSLQS (61 aa). 2 stretches are compositionally biased toward low complexity: residues 399 to 413 and 420 to 450; these read LAPP…AQPA and SSTP…TSPS. A phosphoserine mark is found at S453 and S456. Residue K463 forms a Glycyl lysine isopeptide (Lys-Gly) (interchain with G-Cter in ubiquitin) linkage. WD repeat units follow at residues 533–573, 583–623, 626–665, and 719–759; these read QNGV…LQEV, GHTE…EQLR, GHRD…EPLQ, and DVAP…PFFL. Residues 850 to 915 form a disordered region; sequence PPGMTPVSQA…FEGVDEDEWD (66 aa). Residues 859-869 are compositionally biased toward low complexity; the sequence is APREAPARRAP. Positions 874 to 886 are enriched in basic and acidic residues; it reads LEEKSDQQKKEEL. A Phosphoserine modification is found at S905.

The protein belongs to the WD repeat coronin family. In terms of assembly, interacts with clathrin adapter AP1 complex. This interaction takes place at Golgi membranes and not AP1-positive endosomal membranes. Interacts (when ubiquitinated at Lys-463) with EPS15. The membrane-associated form is phosphorylated on tyrosine residues. In terms of processing, ubiquitinated via 'Lys-33'-linked ubiquitin chains by the BCR(KLHL20) E3 ubiquitin ligase complex: 'Lys-33'-linked ubiquitination promotes interaction with EPS15 and facilitates actin polymerization at the trans-Golgi network, thereby facilitating post-Golgi trafficking. Deubiquitinated by ZRANB1/TRABID.

The protein localises to the golgi apparatus membrane. Its subcellular location is the golgi apparatus. It localises to the trans-Golgi network. It is found in the cytoplasmic vesicle. The protein resides in the cytoplasm. The protein localises to the cytosol. Its function is as follows. F-actin regulator involved in anterograde Golgi to endosome transport: upon ubiquitination via 'Lys-33'-linked ubiquitin chains by the BCR(KLHL20) E3 ubiquitin ligase complex, interacts with EPS15 and localizes to the trans-Golgi network, where it promotes actin polymerization, thereby facilitating post-Golgi trafficking. May play a role in the maintenance of the Golgi apparatus morphology. This is Coronin-7 (CORO7) from Bos taurus (Bovine).